The following is a 213-amino-acid chain: Thymidylate kinase (213 aa).

Position 9 to 16 (9 to 16 (GIEGCGKT)) interacts with ATP.

It belongs to the thymidylate kinase family.

The enzyme catalyses dTMP + ATP = dTDP + ADP. Phosphorylation of dTMP to form dTDP in both de novo and salvage pathways of dTTP synthesis. This Geobacter sulfurreducens (strain ATCC 51573 / DSM 12127 / PCA) protein is Thymidylate kinase.